Here is a 99-residue protein sequence, read N- to C-terminus: Cobalt transport protein CbiN (99 aa).

The next 2 helical transmembrane spans lie at 6–26 (VLMI…YSGL) and 68–88 (SLLF…FFGY).

This sequence belongs to the CbiN family. In terms of assembly, forms an energy-coupling factor (ECF) transporter complex composed of an ATP-binding protein (A component, CbiO), a transmembrane protein (T component, CbiQ) and 2 possible substrate-capture proteins (S components, CbiM and CbiN) of unknown stoichimetry.

It localises to the cell membrane. It functions in the pathway cofactor biosynthesis; adenosylcobalamin biosynthesis. Functionally, part of the energy-coupling factor (ECF) transporter complex CbiMNOQ involved in cobalt import. The protein is Cobalt transport protein CbiN of Methanococcus vannielii (strain ATCC 35089 / DSM 1224 / JCM 13029 / OCM 148 / SB).